We begin with the raw amino-acid sequence, 732 residues long: Inducible ornithine decarboxylase (732 aa).

Lys-355 is subject to N6-(pyridoxal phosphate)lysine.

Belongs to the Orn/Lys/Arg decarboxylase class-I family. Pyridoxal 5'-phosphate is required as a cofactor.

It carries out the reaction L-ornithine + H(+) = putrescine + CO2. The protein operates within amine and polyamine biosynthesis; putrescine biosynthesis via L-ornithine pathway; putrescine from L-ornithine: step 1/1. The first enzyme leading to putrescine and thus polyamine synthesis. The sequence is that of Inducible ornithine decarboxylase from Escherichia coli (strain K12).